The sequence spans 146 residues: Universal stress protein MTH_1154 (146 aa).

This sequence belongs to the universal stress protein A family.

The chain is Universal stress protein MTH_1154 from Methanothermobacter thermautotrophicus (strain ATCC 29096 / DSM 1053 / JCM 10044 / NBRC 100330 / Delta H) (Methanobacterium thermoautotrophicum).